An 809-amino-acid polypeptide reads, in one-letter code: WASP homolog-associated protein with actin, membranes and microtubules (809 aa).

Residues 1-260 (MEDEQPDSLE…EVATLCKLDI (260 aa)) form a mediates association with membranes region. Positions 261–630 (LKSLDEDDLG…FVPVGDQTHS (370 aa)) are mediates interaction with microtubules. Coiled-coil stretches lie at residues 271 to 298 (PRRV…IQDI), 384 to 479 (ELEI…CAKR), and 512 to 542 (SIQM…LQRL). Disordered stretches follow at residues 506-528 (YSRQ…QKKK), 546-571 (KDKR…PSDL), 586-612 (IHPS…CQNC), and 627-707 (QTHS…FSCP). Over residues 515 to 528 (MKRDKIKEEEQKKK) the composition is skewed to basic and acidic residues. Ser606 is modified (phosphoserine). The segment at 631–809 (KSSEELSLPP…DEQDPGQWDG (179 aa)) is mediates actin nucleation. Pro residues predominate over residues 638–659 (LPPPPPPPPPPPPPPPPPPPPL). Polar residues predominate over residues 662–673 (LSSSSQAATHQN). WH2 domains lie at 709–727 (SMDE…LRKV) and 739–756 (INEH…LKKV). The interval 754–809 (KKVHPDLGPNPSSKPTSNRRTSDLERSIKAALQRIKRVSADSEEDSDEQDPGQWDG) is disordered. The span at 763–772 (NPSSKPTSNR) shows a compositional bias: polar residues. The stretch at 770 to 797 (SNRRTSDLERSIKAALQRIKRVSADSEE) forms a coiled coil. Residues 794–803 (DSEEDSDEQD) show a composition bias toward acidic residues. Ser795 carries the phosphoserine modification.

In terms of assembly, interacts with ACTR3; indicative for an association with the ARP2/3 complex. Associates with microtubules; in vitro binds to tubulin heterodimer in a 1:1 stoichiometry; decorates microtubules with a repeat of 80 A along protofilaments. Interacts with RHOD (in GTP-bound form). Expressed in brain, lung, heart, colon and kidney (at protein level).

It localises to the cytoplasm. The protein resides in the endoplasmic reticulum-Golgi intermediate compartment. The protein localises to the cytoplasmic vesicle membrane. Its subcellular location is the golgi apparatus. It is found in the cis-Golgi network. Functionally, acts as a nucleation-promoting factor (NPF) that stimulates Arp2/3-mediated actin polymerization both at the Golgi apparatus and along tubular membranes. Its activity in membrane tubulation requires F-actin and interaction with microtubules. Proposed to use coordinated actin-nucleating and microtubule-binding activities of distinct WHAMM molecules to drive membrane tubule elongation; when MT-bound can recruit and remodel membrane vesicles but is prevented to activate the Arp2/3 complex. Involved as a regulator of Golgi positioning and morphology. Participates in vesicle transport between the reticulum endoplasmic and the Golgi complex. Required for RhoD-dependent actin reorganization such as in cell adhesion and cell migration. The chain is WASP homolog-associated protein with actin, membranes and microtubules (WHAMM) from Homo sapiens (Human).